Reading from the N-terminus, the 247-residue chain is 1-(5-phosphoribosyl)-5-[(5-phosphoribosylamino)methylideneamino] imidazole-4-carboxamide isomerase (247 aa).

The active-site Proton acceptor is D8. D131 acts as the Proton donor in catalysis.

Belongs to the HisA/HisF family.

It is found in the cytoplasm. It catalyses the reaction 1-(5-phospho-beta-D-ribosyl)-5-[(5-phospho-beta-D-ribosylamino)methylideneamino]imidazole-4-carboxamide = 5-[(5-phospho-1-deoxy-D-ribulos-1-ylimino)methylamino]-1-(5-phospho-beta-D-ribosyl)imidazole-4-carboxamide. The protein operates within amino-acid biosynthesis; L-histidine biosynthesis; L-histidine from 5-phospho-alpha-D-ribose 1-diphosphate: step 4/9. The protein is 1-(5-phosphoribosyl)-5-[(5-phosphoribosylamino)methylideneamino] imidazole-4-carboxamide isomerase of Methylobacillus flagellatus (strain ATCC 51484 / DSM 6875 / VKM B-1610 / KT).